The sequence spans 432 residues: Proline--tRNA ligase (432 aa).

The protein belongs to the class-II aminoacyl-tRNA synthetase family. ProS type 2 subfamily. In terms of assembly, homodimer.

Its subcellular location is the cytoplasm. The enzyme catalyses tRNA(Pro) + L-proline + ATP = L-prolyl-tRNA(Pro) + AMP + diphosphate. Catalyzes the attachment of proline to tRNA(Pro) in a two-step reaction: proline is first activated by ATP to form Pro-AMP and then transferred to the acceptor end of tRNA(Pro). In Rickettsia prowazekii (strain Madrid E), this protein is Proline--tRNA ligase.